Here is a 212-residue protein sequence, read N- to C-terminus: Pyrrolidone-carboxylate peptidase (212 aa).

Residues glutamate 78, cysteine 141, and histidine 165 contribute to the active site.

Belongs to the peptidase C15 family. As to quaternary structure, homotetramer.

It is found in the cytoplasm. It carries out the reaction Release of an N-terminal pyroglutamyl group from a polypeptide, the second amino acid generally not being Pro.. Functionally, removes 5-oxoproline from various penultimate amino acid residues except L-proline. This Staphylococcus aureus (strain Mu3 / ATCC 700698) protein is Pyrrolidone-carboxylate peptidase.